A 1176-amino-acid chain; its full sequence is Condensin complex subunit 1 (1176 aa).

Phosphoserine occurs at positions 464 and 475.

Belongs to the CND1 (condensin subunit 1) family. In terms of assembly, component of the condensin complex, which contains the SMC2 and SMC4 heterodimer, and three non SMC subunits that probably regulate the complex: BRN1, YCS4 and YCG1/YCS5.

It localises to the nucleus. It is found in the chromosome. Its function is as follows. Regulatory subunit of the condensin complex, a complex required for conversion of interphase chromatin into mitotic-like condense chromosomes. The condensin complex probably introduces positive supercoils into relaxed DNA in the presence of type I topoisomerases and converts nicked DNA into positive knotted forms in the presence of type II topoisomerases. The condensin complex probably also plays a role during interphase. This Saccharomyces cerevisiae (strain ATCC 204508 / S288c) (Baker's yeast) protein is Condensin complex subunit 1 (YCS4).